A 301-amino-acid polypeptide reads, in one-letter code: GTPase Era (301 aa).

One can recognise an Era-type G domain in the interval 4-173; that stretch reads KAGFVALIGK…LECISEHLSP (170 aa). Positions 12-19 are G1; it reads GKPNAGKS. 12 to 19 is a binding site for GTP; it reads GKPNAGKS. The tract at residues 38-42 is G2; it reads NATRK. The tract at residues 64 to 67 is G3; that stretch reads DTPG. Residues 64-68 and 122-125 each bind GTP; these read DTPGL and SKID. Residues 122-125 are G4; that stretch reads SKID. Positions 152–154 are G5; it reads LSA. One can recognise a KH type-2 domain in the interval 204-280; the sequence is LSDEIPYESD…FLNLQVIAQK (77 aa).

The protein belongs to the TRAFAC class TrmE-Era-EngA-EngB-Septin-like GTPase superfamily. Era GTPase family. Monomer.

It is found in the cytoplasm. It localises to the cell inner membrane. In terms of biological role, an essential GTPase that binds both GDP and GTP, with rapid nucleotide exchange. Plays a role in 16S rRNA processing and 30S ribosomal subunit biogenesis and possibly also in cell cycle regulation and energy metabolism. The polypeptide is GTPase Era (Helicobacter acinonychis (strain Sheeba)).